A 332-amino-acid chain; its full sequence is Torsin-1A (332 aa).

The first 20 residues, Met1–Ala20, serve as a signal peptide directing secretion. The interval Lys91–Gly251 is interaction with SNAPIN. Gly102 to Asn109 is an ATP binding site. Asn143 and Asn158 each carry an N-linked (GlcNAc...) (high mannose) asparagine glycan. Residues Gly251–Asp332 are interaction with KLC1. Residues Arg312–Asp332 form an interaction with SYNE3 region.

The protein belongs to the ClpA/ClpB family. Torsin subfamily. As to quaternary structure, homohexamer. Interacts with TOR1B; the interaction may be specific of neural tissues. Interacts (ATP-bound) with TOR1AIP1 and TOR1AIP2; the interactions induce ATPase activity. Interacts with KLHL14; preferentially when ATP-free. Interacts with KLC1 (via TPR repeats); the interaction associates TOR1A with the kinesin oligomeric complex. Interacts with COPS4; the interaction associates TOR1A with the CSN complex. Interacts with SNAPIN; the interaction is direct and associates SNAPIN with the CSN complex. Interacts with STON2. Interacts (ATP-bound) with SYNE3 (via KASH domain); the interaction is required for SYNE3 nuclear envelope localization. Interacts with VIM; the interaction associates TOR1A with the cytoskeleton. Interacts with PLEC. Interacts (ATP-bound) with SLC6A3; regulates SLC6A3 transport to the plasma membrane. In terms of processing, N-glycosylated. Widely expressed. Highest levels in kidney and liver. In the brain, high levels found in the dopaminergic neurons of the substantia nigra pars compacta, as well as in the neocortex, hippocampus and cerebellum. Also highly expressed in the spinal cord.

It is found in the endoplasmic reticulum lumen. The protein localises to the nucleus membrane. It localises to the cell projection. The protein resides in the growth cone. Its subcellular location is the cytoplasmic vesicle membrane. It is found in the cytoplasmic vesicle. The protein localises to the secretory vesicle. It localises to the synaptic vesicle. The protein resides in the cytoplasm. Its subcellular location is the cytoskeleton. The catalysed reaction is ATP + H2O = ADP + phosphate + H(+). Its function is as follows. Protein with chaperone functions important for the control of protein folding, processing, stability and localization as well as for the reduction of misfolded protein aggregates. Involved in the regulation of synaptic vesicle recycling, controls STON2 protein stability in collaboration with the COP9 signalosome complex (CSN). In the nucleus, may link the cytoskeleton with the nuclear envelope, this mechanism seems to be crucial for the control of nuclear polarity, cell movement and, specifically in neurons, nuclear envelope integrity. Participates in the cellular trafficking and may regulate the subcellular location of multipass membrane proteins such as the dopamine transporter SLC6A3, leading to the modulation of dopamine neurotransmission. In the endoplasmic reticulum, plays a role in the quality control of protein folding by increasing clearance of misfolded proteins such as SGCE variants or holding them in an intermediate state for proper refolding. May have a redundant function with TOR1B in non-neural tissues. This Homo sapiens (Human) protein is Torsin-1A (TOR1A).